A 131-amino-acid polypeptide reads, in one-letter code: Leptin receptor overlapping transcript-like 1 (131 aa).

4 helical membrane passes run 7–27, 32–52, 69–89, and 100–120; these read LISLSFGGAIGLMFLMLGCAL, QYWPLFVLFFYILSPIPYCIA, LAIFLTTGIVVSAFGLPIVFA, and ALVLTGNTVIFATILGFFLVF.

This sequence belongs to the OB-RGRP/VPS55 family.

Its subcellular location is the membrane. In terms of biological role, negatively regulates growth hormone (GH) receptor cell surface expression in liver. May play a role in liver resistance to GH during periods of reduced nutrient availability. This is Leptin receptor overlapping transcript-like 1 (LEPROTL1) from Bos taurus (Bovine).